The following is a 514-amino-acid chain: MDKLQRDGKEDTPRQRRFLYPLLFQEDLYAIAYDHYFNRSSSFEPMENSSSNDRFSFLTVKRLISRIRQQNGSIVPFVNCDQTKLVGHNRSFYSELVLGGLTAVPEVPLSIRSEHSLERMNEWTSFRSIHSILPLMEDKIPHSNFILDIRIPHLTHPEILVRTFRRWIQDAPSLHSLRSVLHEHRNLIISSNLDQLILIASKENTRLSLFLWNYYAYECESLLVPLWKRFFYSRSLPYESFIERTPFYRKIEHIVIFYHKYLKKSLWFLKDPSIHYVKHRERSIIALRGTYLLAKKWRYHITKFWQCHFHLWPQPYRIYIDELSNNCFSFLGYLLSVKMKTSVVRIKMPDDSFITDLITKEFDPIAPTTLLIGSLAKEKFCDISGHPISRLAWTGLTDDDILDRFDRIWRNIFHYHSGSSKKDGLYRMKYILRLPCAKTLACKHKSAIRVVRERFGSELFTKSSPKERESIFLSFSKTRSQRERIWHSDIIQINPLINSCRKKHNLQIEPLFDR.

The protein belongs to the intron maturase 2 family. MatK subfamily.

It localises to the plastid. Its subcellular location is the chloroplast. In terms of biological role, usually encoded in the trnK tRNA gene intron. Probably assists in splicing its own and other chloroplast group II introns. The protein is Maturase K of Dioon spinulosum (Gum palm).